We begin with the raw amino-acid sequence, 210 residues long: Glutathione S-transferase P 1 (210 aa).

Positions 1 to 80 constitute a GST N-terminal domain; sequence PEYTIIYFNA…LLARNHDLYG (80 aa). Glutathione contacts are provided by residues Tyr-7, Arg-13, Trp-38, Lys-44, 51-52, and 64-65; these read QL and QS. The GST C-terminal domain occupies 82–203; that stretch reads NPREASLIDM…SSDAHKKRPI (122 aa).

It belongs to the GST superfamily. Pi family. In terms of assembly, homodimer.

The protein localises to the cytoplasm. The protein resides in the mitochondrion. Its subcellular location is the nucleus. The catalysed reaction is RX + glutathione = an S-substituted glutathione + a halide anion + H(+). In terms of biological role, conjugation of reduced glutathione to a wide number of exogenous and endogenous hydrophobic electrophiles. The polypeptide is Glutathione S-transferase P 1 (Bufo bufo (European toad)).